The primary structure comprises 437 residues: Methionine aminopeptidase 2 (437 aa).

A disordered region spans residues 1–90 (MAAQAAPAEE…LFPNNQYPKG (90 aa)). Basic and acidic residues predominate over residues 10-20 (ELSKLSVDETK). The segment covering 31 to 42 (SDAESGDEEAEE) has biased composition (acidic residues). Residues 52–66 (AKKKKKRKPKKKKKA) are compositionally biased toward basic residues. His-190 serves as a coordination point for substrate. Positions 210, 221, and 290 each coordinate a divalent metal cation. His-298 is a binding site for substrate. Residues Glu-323 and Glu-418 each contribute to the a divalent metal cation site.

It belongs to the peptidase M24A family. Methionine aminopeptidase eukaryotic type 2 subfamily. It depends on Co(2+) as a cofactor. Requires Zn(2+) as cofactor. Mn(2+) serves as cofactor. The cofactor is Fe(2+).

The protein localises to the cytoplasm. The catalysed reaction is Release of N-terminal amino acids, preferentially methionine, from peptides and arylamides.. In terms of biological role, cotranslationally removes the N-terminal methionine from nascent proteins. The N-terminal methionine is often cleaved when the second residue in the primary sequence is small and uncharged (Met-Ala-, Cys, Gly, Pro, Ser, Thr, or Val). This Neurospora crassa (strain ATCC 24698 / 74-OR23-1A / CBS 708.71 / DSM 1257 / FGSC 987) protein is Methionine aminopeptidase 2.